A 300-amino-acid chain; its full sequence is Ubiquitin thioesterase otu2 (300 aa).

2 disordered regions span residues 23 to 73 (RKQL…QQED) and 89 to 141 (TAEK…SEKM). The span at 48–61 (LSQKHATERQKLDK) shows a compositional bias: basic and acidic residues. Residues 62–71 (GDEETNETQQ) are compositionally biased toward acidic residues. Positions 89–109 (TAEKSSVQSSLNTKENTPQQP) are enriched in polar residues. Residues 115-141 (RQKERLERRKAEMKKMSEQAELESEKM) show a composition bias toward basic and acidic residues. Residues 161-298 (LVAVDIPADG…GAHYNSLLYR (138 aa)) enclose the OTU domain.

The protein localises to the cytoplasm. The enzyme catalyses Thiol-dependent hydrolysis of ester, thioester, amide, peptide and isopeptide bonds formed by the C-terminal Gly of ubiquitin (a 76-residue protein attached to proteins as an intracellular targeting signal).. Hydrolase that can remove conjugated ubiquitin from proteins and may therefore play an important regulatory role at the level of protein turnover by preventing degradation. The protein is Ubiquitin thioesterase otu2 (otu2) of Schizosaccharomyces pombe (strain 972 / ATCC 24843) (Fission yeast).